A 168-amino-acid chain; its full sequence is MKEASDREEAPKMVEKNYSTGFRKAHGEKDQSVTKPISLDGRTGEVIVRKSTGKTKIRKGQTEEEYTQQLQHYFEVEQGPVRTKVGWMDEVDPLVEIREGKYDISNKHQRQVLSGFCHRLFYQCKYKECLDLSTYFLGLFEPFNVKNKMKRELEELEYMIERCRGHVL.

The span at 1–15 (MKEASDREEAPKMVE) shows a compositional bias: basic and acidic residues. Positions 1–36 (MKEASDREEAPKMVEKNYSTGFRKAHGEKDQSVTKP) are disordered.

The protein localises to the cytoplasm. This is an uncharacterized protein from Saccharomyces cerevisiae (strain ATCC 204508 / S288c) (Baker's yeast).